Consider the following 229-residue polypeptide: Heptaprenylglyceryl phosphate synthase (229 aa).

Lys-12 lines the sn-glycerol 1-phosphate pocket. Positions 14 and 40 each coordinate Mg(2+). Sn-glycerol 1-phosphate is bound by residues 159–164 (YLEYSG), Gly-189, and 209–210 (GN).

Belongs to the GGGP/HepGP synthase family. Group I subfamily. As to quaternary structure, homodimer. Mg(2+) is required as a cofactor.

It carries out the reaction sn-glycerol 1-phosphate + all-trans-heptaprenyl diphosphate = 3-heptaprenyl-sn-glycero-1-phosphate + diphosphate. The protein operates within membrane lipid metabolism; glycerophospholipid metabolism. In terms of biological role, prenyltransferase that catalyzes in vivo the transfer of the heptaprenyl moiety of heptaprenyl pyrophosphate (HepPP; 35 carbon atoms) to the C3 hydroxyl of sn-glycerol-1-phosphate (G1P), producing heptaprenylglyceryl phosphate (HepGP). This reaction is an ether-bond-formation step in the biosynthesis of archaea-type G1P-based membrane lipids found in Bacillales. This chain is Heptaprenylglyceryl phosphate synthase, found in Bacillus cereus (strain ATCC 14579 / DSM 31 / CCUG 7414 / JCM 2152 / NBRC 15305 / NCIMB 9373 / NCTC 2599 / NRRL B-3711).